The sequence spans 696 residues: Serine/threonine-protein kinase sck1 (696 aa).

Disordered regions lie at residues 1–59 and 77–118; these read MTEI…YDPV and HKEQ…TPPS. The segment covering 11-37 has biased composition (polar residues); sequence SSNSENTNQASPSTIQSHSTQPVLSND. Basic and acidic residues-rich tracts occupy residues 38-49 and 77-88; these read HSTKVNDYEGKE and HKEQSLKEDKES. One can recognise a C2 domain in the interval 122 to 272; it reads IRHDTVVPKD…VQEAWYKLEP (151 aa). One can recognise a Protein kinase domain in the interval 302 to 563; sequence FTALRLIGKG…TTELKEHPFF (262 aa). ATP contacts are provided by residues 308–316 and Lys-331; that span reads IGKGTFGQV. The active-site Proton acceptor is Asp-428. The 80-residue stretch at 564 to 643 folds into the AGC-kinase C-terminal domain; sequence ADINWDLLSK…VNKSIDEQFQ (80 aa). Thr-632 carries the phosphothreonine modification. Ser-665 is modified (phosphoserine).

The protein belongs to the protein kinase superfamily. AGC Ser/Thr protein kinase family. cAMP subfamily.

The catalysed reaction is L-seryl-[protein] + ATP = O-phospho-L-seryl-[protein] + ADP + H(+). The enzyme catalyses L-threonyl-[protein] + ATP = O-phospho-L-threonyl-[protein] + ADP + H(+). Protein kinase that is part of growth control pathway which is at least partially redundant with the cAMP pathway. Required for trehalase activation. The chain is Serine/threonine-protein kinase sck1 (sck1) from Schizosaccharomyces pombe (strain 972 / ATCC 24843) (Fission yeast).